A 195-amino-acid polypeptide reads, in one-letter code: MINLLVIISAYFIGNFSTSFIVGKLTSNIDIRQHGSGNAGSTNVLRTLGVKAAALTFLGDTLKGMLSFYLAQRFVGEQAALMAGIAVVIGHNWPVLLGFKGGKGIATTIGVALIASPLAAIASISLGVVILYRYKYVSLSSITAMTILPFFLFSYGLEYFIFGLVLSVMAIYRHRENIKRLRTGTEKKIGRKTSV.

The next 4 helical transmembrane spans lie at 2-22, 79-99, 111-131, and 146-166; these read INLL…SFIV, AALM…LLGF, VALI…VVIL, and TILP…GLVL.

It belongs to the PlsY family. In terms of assembly, probably interacts with PlsX.

It localises to the cell membrane. The enzyme catalyses an acyl phosphate + sn-glycerol 3-phosphate = a 1-acyl-sn-glycero-3-phosphate + phosphate. It participates in lipid metabolism; phospholipid metabolism. Its function is as follows. Catalyzes the transfer of an acyl group from acyl-phosphate (acyl-PO(4)) to glycerol-3-phosphate (G3P) to form lysophosphatidic acid (LPA). This enzyme utilizes acyl-phosphate as fatty acyl donor, but not acyl-CoA or acyl-ACP. This chain is Glycerol-3-phosphate acyltransferase, found in Alkaliphilus metalliredigens (strain QYMF).